The chain runs to 273 residues: Nitrogenase iron protein 5 (273 aa).

8–15 serves as a coordination point for ATP; the sequence is GKGGIGKS. Residue cysteine 94 participates in [4Fe-4S] cluster binding. An ADP-ribosylarginine; by dinitrogenase reductase ADP-ribosyltransferase modification is found at arginine 97. [4Fe-4S] cluster is bound at residue cysteine 129.

It belongs to the NifH/BchL/ChlL family. In terms of assembly, homodimer. Requires [4Fe-4S] cluster as cofactor. In terms of processing, the reversible ADP-ribosylation of Arg-97 inactivates the nitrogenase reductase and regulates nitrogenase activity.

It carries out the reaction N2 + 8 reduced [2Fe-2S]-[ferredoxin] + 16 ATP + 16 H2O = H2 + 8 oxidized [2Fe-2S]-[ferredoxin] + 2 NH4(+) + 16 ADP + 16 phosphate + 6 H(+). Its function is as follows. The key enzymatic reactions in nitrogen fixation are catalyzed by the nitrogenase complex, which has 2 components: the iron protein and the molybdenum-iron protein. The sequence is that of Nitrogenase iron protein 5 (nifH5) from Clostridium pasteurianum.